We begin with the raw amino-acid sequence, 213 residues long: N-(5'-phosphoribosyl)anthranilate isomerase (213 aa).

Belongs to the TrpF family.

The catalysed reaction is N-(5-phospho-beta-D-ribosyl)anthranilate = 1-(2-carboxyphenylamino)-1-deoxy-D-ribulose 5-phosphate. The protein operates within amino-acid biosynthesis; L-tryptophan biosynthesis; L-tryptophan from chorismate: step 3/5. The protein is N-(5'-phosphoribosyl)anthranilate isomerase of Leptospira interrogans serogroup Icterohaemorrhagiae serovar copenhageni (strain Fiocruz L1-130).